Consider the following 186-residue polypeptide: ATP synthase subunit delta (186 aa).

It belongs to the ATPase delta chain family. In terms of assembly, F-type ATPases have 2 components, F(1) - the catalytic core - and F(0) - the membrane proton channel. F(1) has five subunits: alpha(3), beta(3), gamma(1), delta(1), epsilon(1). F(0) has three main subunits: a(1), b(2) and c(10-14). The alpha and beta chains form an alternating ring which encloses part of the gamma chain. F(1) is attached to F(0) by a central stalk formed by the gamma and epsilon chains, while a peripheral stalk is formed by the delta and b chains.

It is found in the cell inner membrane. Its function is as follows. F(1)F(0) ATP synthase produces ATP from ADP in the presence of a proton or sodium gradient. F-type ATPases consist of two structural domains, F(1) containing the extramembraneous catalytic core and F(0) containing the membrane proton channel, linked together by a central stalk and a peripheral stalk. During catalysis, ATP synthesis in the catalytic domain of F(1) is coupled via a rotary mechanism of the central stalk subunits to proton translocation. This protein is part of the stalk that links CF(0) to CF(1). It either transmits conformational changes from CF(0) to CF(1) or is implicated in proton conduction. This is ATP synthase subunit delta from Leptospira interrogans serogroup Icterohaemorrhagiae serovar copenhageni (strain Fiocruz L1-130).